The sequence spans 345 residues: Fructose-1,6-bisphosphatase class 1 2 (345 aa).

Mg(2+) is bound by residues E90, D109, L111, and D112. Residues 112–115 (DGSS) and N200 contribute to the substrate site. Residue E272 coordinates Mg(2+).

Belongs to the FBPase class 1 family. In terms of assembly, homotetramer. Requires Mg(2+) as cofactor.

It is found in the cytoplasm. It carries out the reaction beta-D-fructose 1,6-bisphosphate + H2O = beta-D-fructose 6-phosphate + phosphate. It functions in the pathway carbohydrate biosynthesis; gluconeogenesis. The protein is Fructose-1,6-bisphosphatase class 1 2 of Nitrobacter hamburgensis (strain DSM 10229 / NCIMB 13809 / X14).